We begin with the raw amino-acid sequence, 225 residues long: Cytidylate kinase (225 aa).

G12–T20 lines the ATP pocket.

This sequence belongs to the cytidylate kinase family. Type 1 subfamily.

The protein localises to the cytoplasm. It catalyses the reaction CMP + ATP = CDP + ADP. It carries out the reaction dCMP + ATP = dCDP + ADP. This chain is Cytidylate kinase, found in Stenotrophomonas maltophilia (strain K279a).